A 245-amino-acid polypeptide reads, in one-letter code: Gas vesicle protein F (245 aa).

It belongs to the gas vesicle GvpF/GvpL family. Binds GvpA.

The protein resides in the gas vesicle. A minor component of the gas vesicle, may be involved in preventing GvpA aggregation during gas vesicle nucleation. Gas vesicles (GV) are hollow, gas filled proteinaceous nanostructures. During planktonic growth they allow positioning of the organism at a favorable depth for light or nutrient acquisition. The protein is Gas vesicle protein F of Dolichospermum flosaquae (Anabaena flos-aquae).